Here is a 124-residue protein sequence, read N- to C-terminus: Small ribosomal subunit protein uS12 (124 aa).

Residue Asp-89 is modified to 3-methylthioaspartic acid.

The protein belongs to the universal ribosomal protein uS12 family. In terms of assembly, part of the 30S ribosomal subunit. Contacts proteins S8 and S17. May interact with IF1 in the 30S initiation complex.

Functionally, with S4 and S5 plays an important role in translational accuracy. Interacts with and stabilizes bases of the 16S rRNA that are involved in tRNA selection in the A site and with the mRNA backbone. Located at the interface of the 30S and 50S subunits, it traverses the body of the 30S subunit contacting proteins on the other side and probably holding the rRNA structure together. The combined cluster of proteins S8, S12 and S17 appears to hold together the shoulder and platform of the 30S subunit. The protein is Small ribosomal subunit protein uS12 of Histophilus somni (strain 129Pt) (Haemophilus somnus).